The sequence spans 648 residues: Protein KASH5 (648 aa).

Residues 1-606 lie on the Cytoplasmic side of the membrane; it reads MHSILRSSLS…HSPGIRISQH (606 aa). Residues 206 to 228 are disordered; sequence PEAEESANLESFGGEDPRPEGPA. The stretch at 230–420 forms a coiled coil; the sequence is AELLSNLEDL…EEQLSQSQEG (191 aa). Residues 473–497 are compositionally biased toward acidic residues; that stretch reads EVEPEPEPEPEPEPEPEPQEVEFPS. Residues 473–545 are disordered; sequence EVEPEPEPEP…EESWVLADPS (73 aa). The helical; Anchor for type IV membrane protein transmembrane segment at 607–627 threads the bilayer; it reads PLVPTPVLGLLLLLLLSILLF. Residues 628-648 are Perinuclear space-facing; it reads SQSPPPTWPHLQLYYLQPPPV.

Core component the LINC complex which is composed of inner nuclear membrane SUN domain-containing proteins coupled to outer nuclear membrane KASH domain-containing nesprins. SUN and KASH domain-containing proteins seem to bind each other promiscuously; however, differentially expression of LINC complex constituents is giving rise to specific assemblies. At least SUN1/2-containing core LINC complexes are proposed to be hexameric composed of three protomers of each KASH and SUN domain-containing protein. Interacts with SUN1; this interaction mediates its telomere localization by forming a SUN1:KASH5 LINC complex. Component of a probable SUN2:KASH5 LINC complex. Self-associates. Interacts with DYNC1H1, DCTN1, DYNC1I1/2 and PAFAH1B1; suggesting the association with the dynein-dynactin motor complex. Restricted to the testis and the early ootidogenesis ovary. Expressed in spermatocytes and oocytes (at protein level).

The protein resides in the nucleus outer membrane. Its subcellular location is the nucleus. It is found in the chromosome. The protein localises to the telomere. It localises to the nucleus envelope. Its function is as follows. As a component of the LINC (LInker of Nucleoskeleton and Cytoskeleton) complex, involved in the connection between the nuclear lamina and the cytoskeleton. The nucleocytoplasmic interactions established by the LINC complex play an important role in the transmission of mechanical forces across the nuclear envelope and in nuclear movement and positioning. Required for telomere attachment to nuclear envelope in the prophase of meiosis and for rapid telomere prophase movements implicating a SUN1/2:KASH5 LINC complex in which SUN1 and SUN2 seem to act at least partial redundantly. Required for homolog pairing during meiotic prophase in spermatocytes and probably oocytes. Essential for male and female gametogenesis. Recruits cytoplasmic dynein to telomere attachment sites at the nuclear envelope in spermatocytes. In oocytes is involved in meiotic resumption and spindle formation. This is Protein KASH5 from Mus musculus (Mouse).